A 512-amino-acid polypeptide reads, in one-letter code: GTPase Obg (512 aa).

Residues 2-159 (ATFVDTVTLH…GDVVLELKVV (158 aa)) enclose the Obg domain. Positions 160–336 (ADVALVGYPS…LSFALAELVE (177 aa)) constitute an OBG-type G domain. GTP is bound by residues 166 to 173 (GYPSAGKS), 191 to 195 (FTTLH), 212 to 215 (DVPG), 288 to 291 (NKID), and 317 to 319 (STV). Mg(2+)-binding residues include Ser-173 and Thr-193. Residues 355–439 (PRAVNEKPFT…GDGIVFDWEP (85 aa)) enclose the OCT domain. Residues 491 to 512 (GEAGLWADEDGTDEDASSDAKA) form a disordered region. Over residues 497–512 (ADEDGTDEDASSDAKA) the composition is skewed to acidic residues.

It belongs to the TRAFAC class OBG-HflX-like GTPase superfamily. OBG GTPase family. Monomer. Mg(2+) is required as a cofactor.

It localises to the cytoplasm. Its function is as follows. An essential GTPase which binds GTP, GDP and possibly (p)ppGpp with moderate affinity, with high nucleotide exchange rates and a fairly low GTP hydrolysis rate. Plays a role in control of the cell cycle, stress response, ribosome biogenesis and in those bacteria that undergo differentiation, in morphogenesis control. The polypeptide is GTPase Obg (Clavibacter michiganensis subsp. michiganensis (strain NCPPB 382)).